A 98-amino-acid polypeptide reads, in one-letter code: Large ribosomal subunit protein uL23 (98 aa).

Belongs to the universal ribosomal protein uL23 family. Part of the 50S ribosomal subunit. Contacts protein L29, and trigger factor when it is bound to the ribosome.

Functionally, one of the early assembly proteins it binds 23S rRNA. One of the proteins that surrounds the polypeptide exit tunnel on the outside of the ribosome. Forms the main docking site for trigger factor binding to the ribosome. This Methylobacterium nodulans (strain LMG 21967 / CNCM I-2342 / ORS 2060) protein is Large ribosomal subunit protein uL23.